We begin with the raw amino-acid sequence, 66 residues long: Small ribosomal subunit protein eS27 (66 aa).

Residues Cys-21, Cys-24, Cys-40, and Cys-43 each contribute to the Zn(2+) site. The C4-type zinc-finger motif lies at 21 to 43 (CPNCGNEQTVFSHATFPVRCLSC).

Belongs to the eukaryotic ribosomal protein eS27 family. In terms of assembly, part of the 30S ribosomal subunit. Requires Zn(2+) as cofactor.

The protein is Small ribosomal subunit protein eS27 of Sulfurisphaera tokodaii (strain DSM 16993 / JCM 10545 / NBRC 100140 / 7) (Sulfolobus tokodaii).